Here is an 802-residue protein sequence, read N- to C-terminus: Oligophrenin-1 (802 aa).

Residues 265–368 (QPTIEGYLYT…WMEAMDGKEP (104 aa)) enclose the PH domain. The Rho-GAP domain maps to 380–564 (MELNEVGFKF…ILIEHFGKIY (185 aa)). Disordered stretches follow at residues 569-588 (EESA…RHKP), 607-666 (LDES…EPCP), 680-770 (GGTK…NAGE), and 783-802 (FETA…GDES). Positions 616-627 (HQTPNGTITSSI) are enriched in polar residues. Basic and acidic residues predominate over residues 716 to 732 (HHKEGDADSFSKVRPPG).

As to quaternary structure, interacts with HOMER1. Interacts with AMPA receptor complexes. Interacts with SH3GL2 (endophilin-A1). Interacts (via C-terminus) with NR1D1. Expressed in brain.

The protein localises to the postsynapse. The protein resides in the presynapse. It localises to the cell projection. Its subcellular location is the axon. It is found in the dendritic spine. The protein localises to the dendrite. The protein resides in the cytoplasm. Functionally, stimulates GTP hydrolysis of members of the Rho family. Its action on RHOA activity and signaling is implicated in growth and stabilization of dendritic spines, and therefore in synaptic function. Critical for the stabilization of AMPA receptors at postsynaptic sites. Critical for the regulation of synaptic vesicle endocytosis at presynaptic terminals. Required for the localization of NR1D1 to dendrites, can suppress its repressor activity and protect it from proteasomal degradation. The sequence is that of Oligophrenin-1 (OPHN1) from Homo sapiens (Human).